The chain runs to 413 residues: Multifunctional CCA protein (413 aa).

The ATP site is built by G8 and R11. 2 residues coordinate CTP: G8 and R11. D21 and D23 together coordinate Mg(2+). Residues R91, R137, and R140 each contribute to the ATP site. CTP contacts are provided by R91, R137, and R140. One can recognise an HD domain in the interval T228–W329.

This sequence belongs to the tRNA nucleotidyltransferase/poly(A) polymerase family. Bacterial CCA-adding enzyme type 1 subfamily. Monomer. Can also form homodimers and oligomers. Mg(2+) is required as a cofactor. It depends on Ni(2+) as a cofactor.

The catalysed reaction is a tRNA precursor + 2 CTP + ATP = a tRNA with a 3' CCA end + 3 diphosphate. It catalyses the reaction a tRNA with a 3' CCA end + 2 CTP + ATP = a tRNA with a 3' CCACCA end + 3 diphosphate. Catalyzes the addition and repair of the essential 3'-terminal CCA sequence in tRNAs without using a nucleic acid template. Adds these three nucleotides in the order of C, C, and A to the tRNA nucleotide-73, using CTP and ATP as substrates and producing inorganic pyrophosphate. tRNA 3'-terminal CCA addition is required both for tRNA processing and repair. Also involved in tRNA surveillance by mediating tandem CCA addition to generate a CCACCA at the 3' terminus of unstable tRNAs. While stable tRNAs receive only 3'-terminal CCA, unstable tRNAs are marked with CCACCA and rapidly degraded. The protein is Multifunctional CCA protein of Shewanella woodyi (strain ATCC 51908 / MS32).